Reading from the N-terminus, the 250-residue chain is uncharacterized protein (250 aa).

7 consecutive transmembrane segments (helical) span residues 36–56, 73–93, 101–121, 128–148, 156–176, 180–200, and 225–245; these read VALG…VPAV, PLYM…GFAM, AGAL…SVML, VAAT…FGYT, FGSF…VSIF, PALL…LIAY, and FGAL…LSFF.

The protein belongs to the BI1 family.

Its subcellular location is the cell membrane. This is an uncharacterized protein from Caulobacter vibrioides (strain ATCC 19089 / CIP 103742 / CB 15) (Caulobacter crescentus).